We begin with the raw amino-acid sequence, 168 residues long: Phosphopantetheine adenylyltransferase (168 aa).

Residue Ser8 participates in substrate binding. ATP is bound by residues 8–9 (SF) and His16. Substrate is bound by residues Lys40, Ala72, and Arg86. Residues 87-89 (GLR), Glu97, and 122-128 (YSFLSSS) each bind ATP.

Belongs to the bacterial CoaD family. In terms of assembly, homohexamer. Mg(2+) is required as a cofactor.

The protein localises to the cytoplasm. The catalysed reaction is (R)-4'-phosphopantetheine + ATP + H(+) = 3'-dephospho-CoA + diphosphate. It functions in the pathway cofactor biosynthesis; coenzyme A biosynthesis; CoA from (R)-pantothenate: step 4/5. Reversibly transfers an adenylyl group from ATP to 4'-phosphopantetheine, yielding dephospho-CoA (dPCoA) and pyrophosphate. In Trichodesmium erythraeum (strain IMS101), this protein is Phosphopantetheine adenylyltransferase.